The primary structure comprises 258 residues: MVLIRVLANLLILQLSYAQKSSELVIGGDECNINEHRSLVVLFNSSGVLCGGTLINQEYVLTAAHCDMPNMQILLGVHSASVLNDDEQARDPEEKYFCLSSNNDTEWDKDIMLIRLNRSVNNSVHIAPLSLPSSPPRLGSVCRVMGWGAITSPNETYPDVPHCANINILRYSLCRAVYLGMPVQSRILCAGILRGGKDSCKGDSGGPLICNGQLQGIVSAGSDPCAKPRVPNLYIKVFDYTDWIQSIIAGNTTVTCPQ.

The signal sequence occupies residues 1 to 18 (MVLIRVLANLLILQLSYA). Residues 19 to 24 (QKSSEL) constitute a propeptide that is removed on maturation. The region spanning 25-249 (VIGGDECNIN…YTDWIQSIIA (225 aa)) is the Peptidase S1 domain. 6 disulfides stabilise this stretch: cysteine 31–cysteine 163, cysteine 50–cysteine 66, cysteine 98–cysteine 256, cysteine 142–cysteine 210, cysteine 174–cysteine 189, and cysteine 200–cysteine 225. N-linked (GlcNAc...) asparagine glycosylation occurs at asparagine 44. Histidine 65 (charge relay system) is an active-site residue. A glycan (N-linked (GlcNAc...) asparagine) is linked at asparagine 103. Aspartate 110 (charge relay system) is an active-site residue. Asparagine 117, asparagine 121, and asparagine 154 each carry an N-linked (GlcNAc...) asparagine glycan. The active-site Charge relay system is serine 204. An N-linked (GlcNAc...) asparagine glycan is attached at asparagine 251.

It belongs to the peptidase S1 family. Snake venom subfamily. Monomer. As to expression, expressed by the venom gland.

The protein resides in the secreted. In terms of biological role, snake venom serine protease that may act in the hemostasis system of the prey. The polypeptide is Snake venom serine protease 3 (TLG3) (Craspedocephalus gramineus (Bamboo pit viper)).